The sequence spans 885 residues: Alanine--tRNA ligase (885 aa).

His564, His568, Cys676, and His680 together coordinate Zn(2+).

Belongs to the class-II aminoacyl-tRNA synthetase family. Requires Zn(2+) as cofactor.

Its subcellular location is the cytoplasm. It carries out the reaction tRNA(Ala) + L-alanine + ATP = L-alanyl-tRNA(Ala) + AMP + diphosphate. Functionally, catalyzes the attachment of alanine to tRNA(Ala) in a two-step reaction: alanine is first activated by ATP to form Ala-AMP and then transferred to the acceptor end of tRNA(Ala). Also edits incorrectly charged Ser-tRNA(Ala) and Gly-tRNA(Ala) via its editing domain. This chain is Alanine--tRNA ligase, found in Brucella ovis (strain ATCC 25840 / 63/290 / NCTC 10512).